A 220-amino-acid chain; its full sequence is Histone H1B (220 aa).

2 disordered regions span residues 1-45 (MTAT…PSAS) and 99-220 (QVKG…APKK). Residues 28–45 (KKVAGGAKAKKPSGPSAS) are compositionally biased toward low complexity. The H15 domain occupies 40-113 (SGPSASELIV…GASGSFKLNK (74 aa)). 4 stretches are compositionally biased toward basic residues: residues 122-134 (AAKK…KAKK), 141-151 (KAPKSPKKPKK), 158-196 (SPKK…KPKT), and 204-220 (KVAK…APKK).

Belongs to the histone H1/H5 family.

Its subcellular location is the nucleus. The protein localises to the chromosome. Functionally, histones H1 are necessary for the condensation of nucleosome chains into higher-order structures. The polypeptide is Histone H1B (Xenopus laevis (African clawed frog)).